Here is a 423-residue protein sequence, read N- to C-terminus: 26S proteasome regulatory subunit 6A homolog (423 aa).

211-218 (GPPGTGKT) is an ATP binding site.

Belongs to the AAA ATPase family.

It localises to the cytoplasm. The protein localises to the nucleus. Functionally, the 26S proteasome is involved in the ATP-dependent degradation of ubiquitinated proteins. The regulatory (or ATPase) complex confers ATP dependency and substrate specificity to the 26S complex. This chain is 26S proteasome regulatory subunit 6A homolog (TBP1), found in Solanum lycopersicum (Tomato).